Here is a 244-residue protein sequence, read N- to C-terminus: Small ribosomal subunit protein eS4 (244 aa).

In terms of domain architecture, S4 RNA-binding spans 43-106 (LPLLLVVRDI…DENYLVLFDE (64 aa)).

This sequence belongs to the eukaryotic ribosomal protein eS4 family.

In Methanococcus maripaludis (strain C6 / ATCC BAA-1332), this protein is Small ribosomal subunit protein eS4.